Here is a 253-residue protein sequence, read N- to C-terminus: uncharacterized protein (253 aa).

Residues 200–209 are compositionally biased toward basic and acidic residues; it reads TGREHAHKGP. 2 disordered regions span residues 200–225 and 234–253; these read TGRE…PNPA and QHSP…SAAT.

As to expression, most abundantly expressed in gastrointestinal tissues. Expressed at lower levels in kidney and placenta. Expressed in fetal brain, liver, placenta, kidney and lung.

This is an uncharacterized protein from Homo sapiens (Human).